The following is a 193-amino-acid chain: MRLLEERILAEGTVLGETILKVDQFLTHQVDYRLMKEIGRVFADQYADLGITKVVTIEASGIAPAVYTAEALEVPMIFAKKHKNITMTEGILTAEVYSFTKQVTSTVSIAGGLLSKEDRVLIIDDFLANGQAAKGLIDIIQQAGAKAVGIGIVIEKSFQAGRQLLEDLGVEVTSLARIKHFDNGTVSFLEADA.

The xanthine site is built by leucine 20 and threonine 27. 128–132 (ANGQA) contacts 5-phospho-alpha-D-ribose 1-diphosphate. Residue lysine 156 coordinates xanthine.

The protein belongs to the purine/pyrimidine phosphoribosyltransferase family. Xpt subfamily. Homodimer.

It is found in the cytoplasm. The catalysed reaction is XMP + diphosphate = xanthine + 5-phospho-alpha-D-ribose 1-diphosphate. The protein operates within purine metabolism; XMP biosynthesis via salvage pathway; XMP from xanthine: step 1/1. Converts the preformed base xanthine, a product of nucleic acid breakdown, to xanthosine 5'-monophosphate (XMP), so it can be reused for RNA or DNA synthesis. The sequence is that of Xanthine phosphoribosyltransferase from Streptococcus equi subsp. zooepidemicus (strain H70).